The primary structure comprises 738 residues: Zinc finger protein 235 (738 aa).

One can recognise a KRAB domain in the interval 8-79 (VTFKDVAVAF…ELQTQRGKHS (72 aa)). Residues 263-285 (YQGNECEEAFNDSSSLELHKQVH) form a C2H2-type 1; degenerate zinc finger. 15 C2H2-type zinc fingers span residues 319–341 (YWCH…QRVH), 347–369 (YTCH…LPIH), 375–397 (YRCD…CRVH), 403–425 (YKCE…ERIH), 431–453 (YKCG…QRVH), 459–481 (YKCD…QRVH), 487–509 (YKCE…QRVH), 515–537 (FRCN…QRVH), 543–565 (YKCE…QRVH), 571–593 (YKCE…QSVH), 599–621 (FKCD…QRVH), 627–649 (YKCD…QIIH), 655–677 (FKCE…QRVH), 683–705 (YTCQ…QRVH), and 711–733 (YICD…QRVH).

It belongs to the krueppel C2H2-type zinc-finger protein family.

It localises to the nucleus. Functionally, may be involved in transcriptional regulation. This Homo sapiens (Human) protein is Zinc finger protein 235 (ZNF235).